Consider the following 379-residue polypeptide: Cytochrome b (379 aa).

The next 4 membrane-spanning stretches (helical) occupy residues phenylalanine 33 to methionine 53, tryptophan 77 to valine 98, tryptophan 113 to leucine 133, and phenylalanine 178 to leucine 198. Heme b contacts are provided by histidine 83 and histidine 97. Residues histidine 182 and histidine 196 each coordinate heme b. A ubiquinone is bound at residue histidine 201. 4 consecutive transmembrane segments (helical) span residues threonine 226–phenylalanine 246, leucine 288–asparagine 308, isoleucine 320–glycine 340, and residue 347–proline 367.

This sequence belongs to the cytochrome b family. As to quaternary structure, the cytochrome bc1 complex contains 11 subunits: 3 respiratory subunits (MT-CYB, CYC1 and UQCRFS1), 2 core proteins (UQCRC1 and UQCRC2) and 6 low-molecular weight proteins (UQCRH/QCR6, UQCRB/QCR7, UQCRQ/QCR8, UQCR10/QCR9, UQCR11/QCR10 and a cleavage product of UQCRFS1). This cytochrome bc1 complex then forms a dimer. It depends on heme b as a cofactor.

The protein localises to the mitochondrion inner membrane. Functionally, component of the ubiquinol-cytochrome c reductase complex (complex III or cytochrome b-c1 complex) that is part of the mitochondrial respiratory chain. The b-c1 complex mediates electron transfer from ubiquinol to cytochrome c. Contributes to the generation of a proton gradient across the mitochondrial membrane that is then used for ATP synthesis. The sequence is that of Cytochrome b (MT-CYB) from Akodon boliviensis (Bolivian grass mouse).